A 429-amino-acid chain; its full sequence is Adenylosuccinate synthetase (429 aa).

GTP contacts are provided by residues 12-18 (GDEGKGK) and 40-42 (GHT). Aspartate 13 serves as the catalytic Proton acceptor. 2 residues coordinate Mg(2+): aspartate 13 and glycine 40. IMP contacts are provided by residues 13-16 (DEGK), 38-41 (NAGH), threonine 128, arginine 142, glutamine 223, threonine 238, and arginine 302. Histidine 41 serves as the catalytic Proton donor. 298–304 (TTTGRPR) contacts substrate. GTP contacts are provided by residues arginine 304, 330 to 332 (SID), and 412 to 414 (SVG).

The protein belongs to the adenylosuccinate synthetase family. In terms of assembly, homodimer. Requires Mg(2+) as cofactor.

It is found in the cytoplasm. It carries out the reaction IMP + L-aspartate + GTP = N(6)-(1,2-dicarboxyethyl)-AMP + GDP + phosphate + 2 H(+). It participates in purine metabolism; AMP biosynthesis via de novo pathway; AMP from IMP: step 1/2. Functionally, plays an important role in the de novo pathway of purine nucleotide biosynthesis. Catalyzes the first committed step in the biosynthesis of AMP from IMP. The polypeptide is Adenylosuccinate synthetase (Bacillus cytotoxicus (strain DSM 22905 / CIP 110041 / 391-98 / NVH 391-98)).